Here is a 159-residue protein sequence, read N- to C-terminus: SsrA-binding protein (159 aa).

Belongs to the SmpB family.

Its subcellular location is the cytoplasm. Its function is as follows. Required for rescue of stalled ribosomes mediated by trans-translation. Binds to transfer-messenger RNA (tmRNA), required for stable association of tmRNA with ribosomes. tmRNA and SmpB together mimic tRNA shape, replacing the anticodon stem-loop with SmpB. tmRNA is encoded by the ssrA gene; the 2 termini fold to resemble tRNA(Ala) and it encodes a 'tag peptide', a short internal open reading frame. During trans-translation Ala-aminoacylated tmRNA acts like a tRNA, entering the A-site of stalled ribosomes, displacing the stalled mRNA. The ribosome then switches to translate the ORF on the tmRNA; the nascent peptide is terminated with the 'tag peptide' encoded by the tmRNA and targeted for degradation. The ribosome is freed to recommence translation, which seems to be the essential function of trans-translation. This Salinispora tropica (strain ATCC BAA-916 / DSM 44818 / JCM 13857 / NBRC 105044 / CNB-440) protein is SsrA-binding protein.